The following is a 193-amino-acid chain: Protein TEX261 (193 aa).

Transmembrane regions (helical) follow at residues 1–21 (MVGV…PPPA), 39–59 (SRII…LYVF), 67–87 (IGVG…FPFI), 94–114 (FILS…FFAE), and 122–142 (VLAY…VSLS).

This sequence belongs to the SVP26 family.

It localises to the membrane. This chain is Protein TEX261 (TEX261), found in Bos taurus (Bovine).